The sequence spans 334 residues: Mediator of RNA polymerase II transcription subunit 4 (334 aa).

Residues 71–100 (QEREQLIRTLEAHVEKRDEVIQQLETNLKS) adopt a coiled-coil conformation. Residues 193-334 (PLITSPSASS…ASKKTGSSNK (142 aa)) form a disordered region. Composition is skewed to polar residues over residues 194–206 (LITS…SNGG) and 251–282 (NEKQ…SSPN).

The protein belongs to the Mediator complex subunit 4 family. In terms of assembly, component of the Mediator complex.

The protein localises to the nucleus. Component of the Mediator complex, a coactivator involved in the regulated transcription of nearly all RNA polymerase II-dependent genes. Mediator functions as a bridge to convey information from gene-specific regulatory proteins to the basal RNA polymerase II transcription machinery. Mediator is recruited to promoters by direct interactions with regulatory proteins and serves as a scaffold for the assembly of a functional preinitiation complex with RNA polymerase II and the general transcription factors. In Caenorhabditis elegans, this protein is Mediator of RNA polymerase II transcription subunit 4 (mdt-4).